Reading from the N-terminus, the 314-residue chain is Methionyl-tRNA formyltransferase (314 aa).

109 to 112 lines the (6S)-5,6,7,8-tetrahydrofolate pocket; it reads SLLP.

The protein belongs to the Fmt family.

The catalysed reaction is L-methionyl-tRNA(fMet) + (6R)-10-formyltetrahydrofolate = N-formyl-L-methionyl-tRNA(fMet) + (6S)-5,6,7,8-tetrahydrofolate + H(+). In terms of biological role, attaches a formyl group to the free amino group of methionyl-tRNA(fMet). The formyl group appears to play a dual role in the initiator identity of N-formylmethionyl-tRNA by promoting its recognition by IF2 and preventing the misappropriation of this tRNA by the elongation apparatus. The sequence is that of Methionyl-tRNA formyltransferase from Syntrophomonas wolfei subsp. wolfei (strain DSM 2245B / Goettingen).